The primary structure comprises 397 residues: Acetate kinase (397 aa).

Mg(2+) is bound at residue asparagine 7. Position 14 (lysine 14) interacts with ATP. Arginine 90 serves as a coordination point for substrate. Aspartate 147 (proton donor/acceptor) is an active-site residue. ATP is bound by residues 207-211 (HLGNG), 282-284 (DFR), and 330-334 (GLGEN). Glutamate 383 provides a ligand contact to Mg(2+).

Belongs to the acetokinase family. Homodimer. Mg(2+) serves as cofactor. Mn(2+) is required as a cofactor.

The protein localises to the cytoplasm. It carries out the reaction acetate + ATP = acetyl phosphate + ADP. Its pathway is metabolic intermediate biosynthesis; acetyl-CoA biosynthesis; acetyl-CoA from acetate: step 1/2. Functionally, catalyzes the formation of acetyl phosphate from acetate and ATP. Can also catalyze the reverse reaction. This chain is Acetate kinase, found in Clostridium botulinum (strain Okra / Type B1).